The primary structure comprises 239 residues: Large ribosomal subunit protein uL1 (239 aa).

The protein belongs to the universal ribosomal protein uL1 family. As to quaternary structure, part of the 50S ribosomal subunit.

In terms of biological role, binds directly to 23S rRNA. The L1 stalk is quite mobile in the ribosome, and is involved in E site tRNA release. Protein L1 is also a translational repressor protein, it controls the translation of the L11 operon by binding to its mRNA. This Rickettsia rickettsii (strain Iowa) protein is Large ribosomal subunit protein uL1.